We begin with the raw amino-acid sequence, 253 residues long: Indole-3-glycerol phosphate synthase (253 aa).

Belongs to the TrpC family.

It carries out the reaction 1-(2-carboxyphenylamino)-1-deoxy-D-ribulose 5-phosphate + H(+) = (1S,2R)-1-C-(indol-3-yl)glycerol 3-phosphate + CO2 + H2O. It participates in amino-acid biosynthesis; L-tryptophan biosynthesis; L-tryptophan from chorismate: step 4/5. The polypeptide is Indole-3-glycerol phosphate synthase (Petrotoga mobilis (strain DSM 10674 / SJ95)).